Consider the following 442-residue polypeptide: Proline--tRNA ligase (442 aa).

It belongs to the class-II aminoacyl-tRNA synthetase family. ProS type 2 subfamily. In terms of assembly, homodimer.

Its subcellular location is the cytoplasm. The enzyme catalyses tRNA(Pro) + L-proline + ATP = L-prolyl-tRNA(Pro) + AMP + diphosphate. Functionally, catalyzes the attachment of proline to tRNA(Pro) in a two-step reaction: proline is first activated by ATP to form Pro-AMP and then transferred to the acceptor end of tRNA(Pro). This is Proline--tRNA ligase from Brucella melitensis biotype 2 (strain ATCC 23457).